Reading from the N-terminus, the 384-residue chain is NADP-dependent alcohol dehydrogenase 3 (384 aa).

It belongs to the iron-containing alcohol dehydrogenase family.

The catalysed reaction is a primary alcohol + NADP(+) = an aldehyde + NADPH + H(+). In terms of biological role, has NADP-dependent alcohol dehydrogenase activity. The sequence is that of NADP-dependent alcohol dehydrogenase 3 from Entamoeba histolytica (strain ATCC 30459 / HM-1:IMSS / ABRM).